We begin with the raw amino-acid sequence, 285 residues long: Phycobilisome 31.6 kDa linker polypeptide, phycocyanin-associated, rod (285 aa).

The region spanning 1 to 180 (MPITTAASRL…LYRGYATSDR (180 aa)) is the PBS-linker domain.

It belongs to the phycobilisome linker protein family.

It is found in the cellular thylakoid membrane. In terms of biological role, rod linker protein, associated with phycocyanin. Linker polypeptides determine the state of aggregation and the location of the disk-shaped phycobiliprotein units within the phycobilisome and modulate their spectroscopic properties in order to mediate a directed and optimal energy transfer. The sequence is that of Phycobilisome 31.6 kDa linker polypeptide, phycocyanin-associated, rod (cpcI3) from Microchaete diplosiphon (Fremyella diplosiphon).